We begin with the raw amino-acid sequence, 1288 residues long: MAREPEEEETVRPAAVVRRCPRCPGWPGAPRPPLWLLCLVACWILGAVADADFSILDEAQVLASQMRRLAAEELGVVTMQRIFNSLVYTEKISNGESEVQQLAKKIREKFNRYLDVVNRNKQVVEASYTAHLTSPLTAIQDCCTIPPSMMEFDGNFNTNVSRTVSCDRLSTTVNSRAFNPGRDLNSVLADNLKSNPGIKWQYFSSEEGIFTVFPAHKFRCKGSYEHRSRPIYVSTVRPQSKHIVVILDHGASVTDTQLQIAKDAAQVILSAIDEHDKISVLTVADAVRTCSLDQCYKTYLSPATSETKRKMSTFVSSVKPSDSPTQHAVGFHRAFQLIRSTSNSTRFQANTDMVIIYLSAGITSKDSSEEDKKATLRVINEENGFLNNSVMILTYALMNDGVTGLKELAFLRDLAEQNSGKYGIPDRTALPVIKGSMMVLNQLSNLETTVGRFYTNLPNRMIDEAVFSLPFSDEMGDGLIMTVSKPCYFGNLLLGIVGVDVNLAYILEDVTYYQDSLASYTFLIDDKGYTLMHPSLTRPYLLSEPPLHTDIIHYENIPKFELVRQNILSLPLGSQIITVPVNSSLSWHINKLRETGKEAYNVSYAWKMVQDTSFILCIVVIQPEIPVKQLKNLNTVPSSKLLYHRLDLLGQPSACLHFKQLATLESPTVMLSAGSFSSPYEHLSQPETKRMVEHYTAYLSDNTRLIANPGLKFSVRNEVMATSHVTDEWMTQMEMSSLNTYIVRRYIATPNGVLRIYPGSLMDKAFDPTRRQWYLHAVANPGLISLTGPYLDVGGAGYVVTISHTIHSSSTQLSSGHTVAVMGIDFTLRYFYKVLMDLLPVCNQDGGNKIRCFIMEDRGYLVAHPTLVDPKGHAPLEQQHITHKEPLVANDILNHPNFVKKNLCNSFSDRTVQRSYKFNTSLVGDLTNLVHGSHCSKYRLTRIPGTNAFVGIVNETCDSLAFCACSMVDRLCLNCHRMEQNECECPCECPLEVNECTGNLTNAENRNPSCEVHQEPVTYTAIDPGLQDALQQCVNSRCNQRMESGDCFGVLDCEWCVVDSDGKTHLDKSYCAPQKECFGGIVGAKSPYVDDMGAIGDEVITLNMIKSAPVGPVAGGIMGCIMVLVLAVYAYRHQIHRRSHQHMSPLAAQEMSVRMSNLENDRDERDDDSHEDRGIISNTRFIAAVMERHVHSPERRRRYWGRSGTESDHGYSTMSPQEDSENPPCNNDPLSAGVDVGNHDDDLDLDTPPQTAALLSHKFHHYRPHHPTLHHSHHLQAAVTVHTVDAEC.

The N-terminal stretch at 1 to 49 is a signal peptide; the sequence is MAREPEEEETVRPAAVVRRCPRCPGWPGAPRPPLWLLCLVACWILGAVA. The Extracellular portion of the chain corresponds to 50-1109; that stretch reads DADFSILDEA…ITLNMIKSAP (1060 aa). N159 carries N-linked (GlcNAc...) asparagine glycosylation. The 216-residue stretch at 242–457 folds into the VWFA domain; sequence HIVVILDHGA…TTVGRFYTNL (216 aa). Cache domains follow at residues 467–546 and 786–867; these read FSLP…SEPP and LTGP…HPTL. A helical transmembrane segment spans residues 1110–1130; that stretch reads VGPVAGGIMGCIMVLVLAVYA. At 1131–1288 the chain is on the cytoplasmic side; sequence YRHQIHRRSH…VTVHTVDAEC (158 aa). 2 disordered regions span residues 1157–1176 and 1187–1237; these read NLENDRDERDDDSHEDRGII and ERHV…VDVG. Basic and acidic residues predominate over residues 1159–1174; sequence ENDRDERDDDSHEDRG. The segment covering 1210–1229 has biased composition (polar residues); the sequence is GYSTMSPQEDSENPPCNNDP.

It belongs to the calcium channel subunit alpha-2/delta family.

It is found in the membrane. May regulate voltage-dependent calcium channels. The chain is VWFA and cache domain-containing protein 1 (Cachd1) from Mus musculus (Mouse).